The chain runs to 823 residues: Hypoxia-inducible factor 1-alpha (823 aa).

Residues 1–30 (MEGAGGANDKKKISSERRKEKSRDAARSRR) form a disordered region. The interaction with TSGA10 stretch occupies residues 1-401 (MEGAGGANDK…KEPDALTLLA (401 aa)). The segment covering 8–30 (NDKKKISSERRKEKSRDAARSRR) has biased composition (basic and acidic residues). The 54-residue stretch at 17 to 70 (RRKEKSRDAARSRRSKESEVFYELAHQLPLPHNVSSHLDKASVMRLTISYLRVR) folds into the bHLH domain. Residues 21–30 (KSRDAARSRR) form a DNA-binding region. The PAS 1 domain occupies 85–158 (KAQMNCFYLK…THRNGLVKKG (74 aa)). The segment at 170 to 191 (RMKCTLTSRGRTMNIKSATWKV) is required for heterodimer formation with ARNT. Residues 228 to 298 (PHPSNIEIPL…KTHHDMFTKG (71 aa)) form the PAS 2 domain. The residue at position 247 (Ser247) is a Phosphoserine; by CK1. In terms of domain architecture, PAC spans 302–345 (TGQYRMLAKRGGYVWIETQATVIYNTKNSQPQCIVCVNYVVSGI). Positions 401–600 (APAAGDTIIS…QSASTNTVFQ (200 aa)) are ODD. Pro402 carries the 4-hydroxyproline modification. Polar residues predominate over residues 494-517 (IQDQPASPSDGSTRQSSPEPNSPS). The interval 494 to 521 (IQDQPASPSDGSTRQSSPEPNSPSEYCF) is disordered. The segment at 531 to 575 (FKLELVEKLFAEDTEAKNPFSTQDTDLDLEMLAPYIPMDDDFQLR) is NTAD. Lys532 is modified (N6-acetyllysine; alternate). Lys532 participates in a covalent cross-link: Glycyl lysine isopeptide (Lys-Gly) (interchain with G-Cter in ubiquitin); alternate. Residues Lys538 and Lys547 each participate in a glycyl lysine isopeptide (Lys-Gly) (interchain with G-Cter in ubiquitin) cross-link. Ser551 bears the Phosphoserine; by GSK3-beta mark. Thr555 carries the phosphothreonine; by GSK3-beta modification. Pro564 carries the 4-hydroxyproline modification. Ser576 is modified (phosphoserine; by PLK3). Positions 576-782 (SFDQLSPLEN…SDLACRLLGQ (207 aa)) are ID. 2 disordered regions span residues 581–602 (SPLE…FQPT) and 639–685 (PSPP…PRSP). Position 589 is a phosphoserine; by GSK3-beta (Ser589). The segment covering 651-666 (ATTSPYSDTGSRTASP) has biased composition (polar residues). Ser654 bears the Phosphoserine; by PLK3 mark. At Lys706 the chain carries N6-acetyllysine. Residues 715–721 (RKRKIEH) carry the Nuclear localization signal motif. A CTAD region spans residues 783 to 823 (SMDESGLPQLTSYDCEVNAPIQGSRNLLQGEELLRALDQVN). Position 797 is an S-nitrosocysteine (Cys797). The residue at position 800 (Asn800) is a (3S)-3-hydroxyasparagine.

In terms of assembly, interacts with the ARNT; forms a heterodimer that binds core DNA sequence 5'-TACGTG-3' within the hypoxia response element (HRE) of target gene promoters. Interacts with COPS5; the interaction increases the transcriptional activity of HIF1A through increased stability. Interacts with EP300 (via TAZ-type 1 domains); the interaction is stimulated in response to hypoxia and inhibited by CITED2. Interacts with CREBBP (via TAZ-type 1 domains). Interacts with NCOA1, NCOA2, APEX1 and HSP90. Interacts (hydroxylated within the ODD domain) with VHLL (via beta domain); the interaction, leads to polyubiquitination and subsequent HIF1A proteasomal degradation. During hypoxia, sumoylated HIF1A also binds VHL; the interaction promotes the ubiquitination of HIF1A. Interacts with SENP1; the interaction desumoylates HIF1A resulting in stabilization and activation of transcription. Interacts (via the ODD domain) with NAA10; the interaction appears not to acetylate HIF1A nor have any affect on protein stability, during hypoxia. Interacts with RWDD3; the interaction enhances HIF1A sumoylation. Interacts with TSGA10. Interacts with HIF3A. Interacts with RORA (via the DNA binding domain); the interaction enhances HIF1A transcription under hypoxia through increasing protein stability. Interaction with PSMA7 inhibits the transactivation activity of HIF1A under both normoxic and hypoxia-mimicking conditions. Interacts with USP20. Interacts with RACK1; promotes HIF1A ubiquitination and proteasome-mediated degradation. Interacts (via N-terminus) with USP19. Interacts with SIRT2. Interacts (deacetylated form) with EGLN1. Interacts with CBFA2T3. Interacts with HSP90AA1 and HSP90AB1. Interacts with DCUN1D1; this interaction increases the interaction between VHL and DCUN1D1. Interacts with HIF1AN. Post-translationally, S-nitrosylation of Cys-797 may be responsible for increased recruitment of p300 coactivator necessary for transcriptional activity of HIF-1 complex. Acetylation of Lys-532 by ARD1 increases interaction with VHL and stimulates subsequent proteasomal degradation. Deacetylation of Lys-706 by SIRT2 increases its interaction with and hydroxylation by EGLN1 thereby inactivating HIF1A activity by inducing its proteasomal degradation. In terms of processing, ubiquitinated; in normoxia, following hydroxylation and interaction with VHL. Lys-532 appears to be the principal site of ubiquitination. Clioquinol, the Cu/Zn-chelator, inhibits ubiquitination through preventing hydroxylation at Asn-800. Ubiquitinated by E3 ligase VHL. Deubiquitinated by UCHL1. Post-translationally, requires phosphorylation for DNA-binding. Phosphorylation at Ser-247 by CSNK1D/CK1 represses kinase activity and impairs ARNT binding. Phosphorylation by GSK3-beta and PLK3 promote degradation by the proteasome. The iron and 2-oxoglutarate dependent 3-hydroxylation of asparagine is (S) stereospecific within HIF CTAD domains. In terms of processing, sumoylated; with SUMO1 under hypoxia. Sumoylation is enhanced through interaction with RWDD3. Both sumoylation and desumoylation seem to be involved in the regulation of its stability during hypoxia. Sumoylation can promote either its stabilization or its VHL-dependent degradation by promoting hydroxyproline-independent HIF1A-VHL complex binding, thus leading to HIF1A ubiquitination and proteasomal degradation. Desumoylation by SENP1 increases its stability amd transcriptional activity. There is a disaccord between various publications on the effect of sumoylation and desumoylation on its stability and transcriptional activity. Post-translationally, in normoxia, is hydroxylated on Pro-402 and Pro-564 in the oxygen-dependent degradation domain (ODD) by EGLN1/PHD2 and EGLN2/PHD1. EGLN3/PHD3 has also been shown to hydroxylate Pro-564. The hydroxylated prolines promote interaction with VHL, initiating rapid ubiquitination and subsequent proteasomal degradation. Deubiquitinated by USP20. Under hypoxia, proline hydroxylation is impaired and ubiquitination is attenuated, resulting in stabilization. In normoxia, is hydroxylated on Asn-800 by HIF1AN, thus abrogating interaction with CREBBP and EP300 and preventing transcriptional activation. Repressed by iron ion, via Fe(2+) prolyl hydroxylase (PHD) enzymes-mediated hydroxylation and subsequent proteasomal degradation.

It is found in the cytoplasm. Its subcellular location is the nucleus. Its activity is regulated as follows. Induced by reactive oxygen species (ROS). Functionally, functions as a master transcriptional regulator of the adaptive response to hypoxia. Under hypoxic conditions, activates the transcription of over 40 genes, including erythropoietin, glucose transporters, glycolytic enzymes, vascular endothelial growth factor, HILPDA, and other genes whose protein products increase oxygen delivery or facilitate metabolic adaptation to hypoxia. Plays an essential role in embryonic vascularization, tumor angiogenesis and pathophysiology of ischemic disease. Heterodimerizes with ARNT; heterodimer binds to core DNA sequence 5'-TACGTG-3' within the hypoxia response element (HRE) of target gene promoters. Activation requires recruitment of transcriptional coactivators such as CREBBP and EP300. Activity is enhanced by interaction with NCOA1 and/or NCOA2. Interaction with redox regulatory protein APEX1 seems to activate CTAD and potentiates activation by NCOA1 and CREBBP. Involved in the axonal distribution and transport of mitochondria in neurons during hypoxia. The protein is Hypoxia-inducible factor 1-alpha (HIF1A) of Bos taurus (Bovine).